The chain runs to 848 residues: Probable disease resistance protein At5g43730 (848 aa).

A coiled-coil region spans residues 25 to 62 (SNYIHLMESNLDALQKTMEELKNGRDDLLARVSIEEDK). One can recognise an NB-ARC domain in the interval 137 to 439 (VAQKIIPKAE…CEGYINPNRY (303 aa)). 179–186 (GMGGIGKT) contacts ATP. LRR repeat units lie at residues 534-555 (NLST…FFLF), 558-580 (KLVV…ISNL), 582-604 (SLQY…KKLR), 605-627 (KLIY…ATTL), and 629-649 (NLQV…IMEE).

This sequence belongs to the disease resistance NB-LRR family.

Probable disease resistance protein. The protein is Probable disease resistance protein At5g43730 of Arabidopsis thaliana (Mouse-ear cress).